The following is a 328-amino-acid chain: RNA-binding motif protein, X-linked 2 (328 aa).

A Glycyl lysine isopeptide (Lys-Gly) (interchain with G-Cter in SUMO2) cross-link involves residue Lys-8. One can recognise an RRM domain in the interval 36–114 (AWIFLGGLPY…RTIRVDHVAN (79 aa)). Positions 118 to 328 (PQESEDVDDV…SFHASDRRHY (211 aa)) are disordered. Phosphothreonine is present on Thr-140. Ser-149 is modified (phosphoserine). The segment covering 157 to 172 (TKKPKKDKKEKKKKKE) has biased composition (basic residues). 3 stretches are compositionally biased toward basic and acidic residues: residues 192 to 219 (TVKE…ECRE), 236 to 247 (GRAEEPEWEAKK), and 255 to 273 (KPSS…DRGR). Lys-246 is covalently cross-linked (Glycyl lysine isopeptide (Lys-Gly) (interchain with G-Cter in SUMO2)). Phosphoserine is present on Ser-274. Residues 291–314 (HRSRSRSRSRSPDRSHRHKKHRYS) show a composition bias toward basic residues. Residues 315–328 (HERESFHASDRRHY) show a composition bias toward basic and acidic residues.

It belongs to the IST3 family. As to quaternary structure, part of the activated spliceosome B/catalytic step 1 spliceosome, one of the forms of the spliceosome which has a well-formed active site but still cannot catalyze the branching reaction and is composed of at least 52 proteins, the U2, U5 and U6 snRNAs and the pre-mRNA. Component of the minor spliceosome, which splices U12-type introns.

The protein resides in the nucleus. Functionally, involved in pre-mRNA splicing as component of the activated spliceosome. As a component of the minor spliceosome, involved in the splicing of U12-type introns in pre-mRNAs. The polypeptide is RNA-binding motif protein, X-linked 2 (Rbmx2) (Rattus norvegicus (Rat)).